A 410-amino-acid polypeptide reads, in one-letter code: Arginine deiminase (410 aa).

Residue cysteine 400 is the Amidino-cysteine intermediate of the active site.

Belongs to the arginine deiminase family.

The protein localises to the cytoplasm. The enzyme catalyses L-arginine + H2O = L-citrulline + NH4(+). It functions in the pathway amino-acid degradation; L-arginine degradation via ADI pathway; carbamoyl phosphate from L-arginine: step 1/2. The sequence is that of Arginine deiminase from Bacillus cereus (strain ATCC 10987 / NRS 248).